Consider the following 433-residue polypeptide: Malate synthase (433 aa).

16–17 (TS) lines the acetyl-CoA pocket. Aspartate 52 lines the Mg(2+) pocket. Arginine 84 serves as a coordination point for acetyl-CoA. Glyoxylate contacts are provided by residues arginine 84, glutamate 158, and 191–192 (VD). The Mg(2+) site is built by glutamate 158 and aspartate 192. 2 residues coordinate acetyl-CoA: arginine 236 and leucine 259. Aspartate 388 acts as the Proton acceptor in catalysis.

It belongs to the HpcH/HpaI aldolase family. Homotrimer and homohexamer in equilibrium. The cofactor is Mg(2+).

It localises to the cytoplasm. It carries out the reaction glyoxylate + acetyl-CoA + H2O = (S)-malate + CoA + H(+). It participates in carbohydrate metabolism; glyoxylate cycle; (S)-malate from isocitrate: step 2/2. Involved in the glyoxylate cycle which synthesizes precursors for carbohydrates from C2 compounds such as acetate. Catalyzes the Claisen condensation between acetyl-coenzyme A (acetyl-CoA) and glyoxylate to form the malyl-CoA intermediate that is subsequently hydrolyzed to produce malate and CoA. This chain is Malate synthase (aceB), found in Haloferax volcanii (strain ATCC 29605 / DSM 3757 / JCM 8879 / NBRC 14742 / NCIMB 2012 / VKM B-1768 / DS2) (Halobacterium volcanii).